An 83-amino-acid polypeptide reads, in one-letter code: Apolipoprotein C-I, acidic form (83 aa).

Positions 1-26 are cleaved as a signal peptide; it reads MRLFLSLPVLVVVLSMVLEGPAPAQG.

Belongs to the apolipoprotein C1 family.

It is found in the secreted. This chain is Apolipoprotein C-I, acidic form (APOC1A), found in Pan troglodytes (Chimpanzee).